The following is a 216-amino-acid chain: Small ribosomal subunit protein uS3 (216 aa).

Residues 38–108 (LREFVKKKLH…DLAIDIQEVK (71 aa)) enclose the KH type-2 domain.

It belongs to the universal ribosomal protein uS3 family. Part of the 30S ribosomal subunit. Forms a tight complex with proteins S10 and S14.

Functionally, binds the lower part of the 30S subunit head. Binds mRNA in the 70S ribosome, positioning it for translation. The sequence is that of Small ribosomal subunit protein uS3 from Desulfosudis oleivorans (strain DSM 6200 / JCM 39069 / Hxd3) (Desulfococcus oleovorans).